We begin with the raw amino-acid sequence, 253 residues long: 5-oxoprolinase subunit A (253 aa).

This sequence belongs to the LamB/PxpA family. As to quaternary structure, forms a complex composed of PxpA, PxpB and PxpC.

The enzyme catalyses 5-oxo-L-proline + ATP + 2 H2O = L-glutamate + ADP + phosphate + H(+). Its function is as follows. Catalyzes the cleavage of 5-oxoproline to form L-glutamate coupled to the hydrolysis of ATP to ADP and inorganic phosphate. The protein is 5-oxoprolinase subunit A of Bacillus cereus (strain 03BB102).